The primary structure comprises 490 residues: 5'-3' exonuclease PLD3 (490 aa).

Topologically, residues 1 to 38 (MKPKLMYQELKVPAEEPANELPMNEIEAWKAAEKKARW) are cytoplasmic. A helical; Signal-anchor for type II membrane protein transmembrane segment spans residues 39–59 (VLLVLILAVVGFGALMTQLFL). Topologically, residues 60–490 (WEYGDLHLFG…DSVGNACRLL (431 aa)) are lumenal. 2 cysteine pairs are disulfide-bonded: cysteine 77–cysteine 239 and cysteine 81–cysteine 237. N-linked (GlcNAc...) asparagine glycans are attached at residues asparagine 97 and asparagine 132. Residues 196–223 (THGVLHTKFWVVDQTHFYLGSANMDWRS) enclose the PLD phosphodiesterase 1 domain. Active-site residues include histidine 201, lysine 203, and aspartate 208. The active-site Proton donor is histidine 201. Residues histidine 201 and lysine 203 each coordinate phosphate. A phosphate-binding site is contributed by asparagine 218. Residues asparagine 236, asparagine 284, and asparagine 387 are each glycosylated (N-linked (GlcNAc...) asparagine). An intrachain disulfide couples cysteine 366 to cysteine 487. A PLD phosphodiesterase 2 domain is found at 411 to 437 (YARVNHNKYMVTERATYIGTSNWSGNY). A phosphate-binding site is contributed by histidine 416. Histidine 416 functions as the Nucleophile in the catalytic mechanism. Mg(2+) is bound at residue phenylalanine 438.

The protein belongs to the phospholipase D family. As to quaternary structure, homodimer. Interacts with APP. Post-translationally, N-glycosylated. In terms of processing, proteolytically processed to a soluble form that is stable within endosomes and lysosomes. During transport through the secretory pathway becomes proteolysed by cysteine proteases, thereby releasing a stable soluble lysosomal lumenal polypeptide, whereas the transmembrane-bound fragment is rapidly degraded. Its transport route to lysosomes involves ubiquitination and the ESCRT complex. Ubiquitinated. Ubiquitination mediates sorting into lysosomes.

It localises to the endoplasmic reticulum membrane. Its subcellular location is the lysosome lumen. It is found in the early endosome membrane. The protein resides in the late endosome membrane. The protein localises to the golgi apparatus membrane. It localises to the endosome membrane. The enzyme catalyses Exonucleolytic cleavage in the 5'- to 3'-direction to yield nucleoside 3'-phosphates.. It catalyses the reaction a 5'-end 5'-dephospho-ribonucleotidyl-ribonucleotide-RNA + H2O = a ribonucleoside 3'-phosphate + a 5'-end dephospho-ribonucleoside-RNA + H(+). It carries out the reaction a ribonucleoside 3'-phosphate-2'-3'-cyclophospho-GMP + H2O = a ribonucleoside 3'-phosphate + 2',3'-cyclophospho-GMP + H(+). The catalysed reaction is a 5'-end 5'-dephospho-2'-deoxyribonucleotidyl-2'-deoxyribonucleotide in single-stranded DNA + H2O = a 5'-end dephospho-2'-deoxyribonucleoside in single-stranded DNA + a 2'-deoxyribonucleoside 3'-phosphate + H(+). The enzyme catalyses a 5'-end 5'-phospho-2'-deoxyribonucleotide in single-stranded DNA + H2O = a 5'-end 5'-dephospho-2'-deoxyribonucleotide in single-stranded DNA + phosphate. It catalyses the reaction a 3-lyso-sn-glycero-1-phospho-(3'-acyl-1'-sn-glycerol) + a 1-acyl-sn-glycerol = a 3-acyl-sn-glycero-1-phospho-(3'-acyl-1'-sn-glycerol) + glycerol. It carries out the reaction 3-lyso-sn-glycero-1-phospho-(3'-(9Z-octadecenoyl)-1'-sn-glycerol) + 1-(9Z-octadecenoyl)-sn-glycerol = 3-(9Z-octadecenoyl)-sn-glycero-1-phospho-(3'-(9Z-octadecenoyl)-1'-sn-glycerol) + glycerol. Its function is as follows. 5'-&gt;3' exonuclease that hydrolyzes the phosphodiester bond of single-stranded DNA (ssDNA) and RNA molecules to form nucleoside 3'-monophosphates and 5'-end 5'-hydroxy deoxyribonucleotide/ribonucleotide fragments. Partially redundant with PLD4, can cleave all four nucleotides displaying higher efficiency for ssDNA and RNA fragments initiated with uridine and guanosine residues and lower efficiency for cytidine-initiated substrates. As a result, it does not always degrade polynucleotides to the single nucleotide level, it can stall at specific sites sparing certain fragments from exonucleolytic degradation. Processes self and pathogenic ssDNA and RNA molecules that reach the endolysosomal compartment via phagocytosis or autophagy and may serve as 'danger' signals for recognition by innate immune receptors such as toll-like receptors (TLRs). Degrades mitochondrial CpG-rich ssDNA fragments to prevent TLR9 activation and autoinflammatory response, but it can cleave viral RNA to generate ligands for TLR7 activation and initiate antiviral immune responses. In plasmacytoid dendritic cells, it cooperates with endonuclease RNASET2 to release 2',3'-cyclic guanosine monophosphate (2',3'-cGMP), a potent stimulatory ligand for TLR7. Produces 2',3'-cGMPs and cytidine-rich RNA fragments that occupy TLR7 ligand-binding pockets and trigger a signaling-competent state. Can exert polynucleotide phosphatase activity toward 5'-phosphorylated ssDNA substrates although at a slow rate. Transphosphatidylase that catalyzes the exchange with R to S stereo-inversion of the glycerol moiety between (S,R)-lysophosphatidylglycerol (LPG) and monoacylglycerol (MAG) substrates to yield (S,S)-bis(monoacylglycero)phosphate (BMP). Can synthesize a variety of (S,S)-BMPs representing the main phospholipid constituent of lysosomal intralumenal vesicle (ILV) membranes that bind acid hydrolases for lipid degradation. Regulates the homeostasis and interorganellar communication of the endolysosomal system with an overall impact on cellular removal of dysfunctional organelles via autophagy as well as proper protein and lipid turnover. May play a role in myotube formation in response to ER stress. This is 5'-3' exonuclease PLD3 (PLD3) from Pongo abelii (Sumatran orangutan).